The sequence spans 143 residues: Sirohydrochlorin cobaltochelatase (143 aa).

His9 acts as the Proton acceptor in catalysis. His9 provides a ligand contact to Co(2+). Residue His9 participates in Ni(2+) binding. Substrate-binding positions include Glu45 and 70–75 (LAHGIH). His75 contacts Co(2+). His75 serves as a coordination point for Ni(2+).

Belongs to the CbiX family. CbiXS subfamily. In terms of assembly, homotetramer; dimer of dimers.

It catalyses the reaction Co-sirohydrochlorin + 2 H(+) = sirohydrochlorin + Co(2+). The catalysed reaction is Ni-sirohydrochlorin + 2 H(+) = sirohydrochlorin + Ni(2+). It functions in the pathway cofactor biosynthesis; adenosylcobalamin biosynthesis; cob(II)yrinate a,c-diamide from sirohydrochlorin (anaerobic route): step 1/10. Catalyzes the insertion of Co(2+) into sirohydrochlorin as part of the anaerobic pathway to cobalamin biosynthesis. Involved in the biosynthesis of the unique nickel-containing tetrapyrrole coenzyme F430, the prosthetic group of methyl-coenzyme M reductase (MCR), which plays a key role in methanogenesis and anaerobic methane oxidation. Catalyzes the insertion of Ni(2+) into sirohydrochlorin to yield Ni-sirohydrochlorin. This Methanocaldococcus jannaschii (strain ATCC 43067 / DSM 2661 / JAL-1 / JCM 10045 / NBRC 100440) (Methanococcus jannaschii) protein is Sirohydrochlorin cobaltochelatase.